A 992-amino-acid chain; its full sequence is MMEADRPEKLFVGGLNLKTDEKALKAEFGKYGHIIKVFLIKDRKTNKSRGFAFVTFESPADAKAAARDMNGKYLDGKAIMVAQTIKPAFESSRWVPPTPGSGSRSRFSHRTRGGGSSPQRPPSQGRPDDGRGYVGYFDLWPYRAPMPRKRGPPPRHCASPPHKRRDPGDFVPALREYSRRYYGHSSVPDYCPXRGDGNRNGYRGRDHDYMDHPSKGSYREPLKSYGGPCGAAPVRGTPPSYGGGCCYEEYQGNSPDACSEGRSSEALPVVLPDAYSRDHLPKAYSGGRSSSSNSYSRSDRYGEEGCYEEYRGRSPDAHSGGRNSSSNSYGQSHHYGGEGRYEEYRGRYEEYRGRSHEARSGGRSTDAHSGGRSDNAYSGGHDSSSWSDCCGGGGRYEEYQGRSLDANSGGRSPEAYSGGHDNSSWSDRYGVGGHYEENRGHSLDANSGGRSPDTHSGGRSSSSNSYGQSHRYGGEGHYEYRGRSHDAHSGGCSADAYSGGHDSSSRSHRYRGGGRYVEYRGRSLDANSGGCWPDAYSGGHDSSSQSYRYRGGGCYEEYRGRSLDANSGGRSPNAYSGGHDSSSRSHRYGGGGCYEEYRGRSLDANSGGRWPDAYSGGHDSSSQSNRYGGGGCYEEYRGRSLDANSGGCSPNAYSGGHDSSSQSHRYGGGGRSLDANSGGRSPDAYSGGHDSSSQSNRYGGGSRYEEYRGRSLDANSSGRLPDAYSGGHDSSSWSHRYGGGGRYEEYRGRSLDANSGGRSPNAYSGGRDSSSNSYDRSHRYGGGGHYEEYRGRSHDTHSRGQSPDAHSGDRSTEAYSRGRNSFSNSYGQSDHYGRGGRYEEYQGRSPDAYGGGRGLNSSNNSHGRSHRYGGGGRYEEYRGPSPDAHSGGHDSSIKSYGLSDRYGGGGHYEEYQGSLPDAYSGDHDRSSNSYGRSDRYSRGRDRVGRPDRGLPLPMETGSPPLHDSYSRSGCRVPRGGGRQGGRFERGEGQSRY.

One can recognise an RRM domain in the interval 8 to 86 (EKLFVGGLNL…KAIMVAQTIK (79 aa)). 7 disordered regions span residues 91-130 (SSRWVPPTPGSGSRSRFSHRTRGGGSSPQRPPSQGRPDDG), 144-169 (APMPRKRGPPPRHCASPPHKRRDPGD), 188-207 (PDYCPXRGDGNRNGYRGRDH), 278-385 (DHLP…DSSS), 397-511 (EEYQ…HRYR), 562-588 (SLDANSGGRSPNAYSGGHDSSSRSHRY), and 644-992 (NSGG…QSRY). Over residues 284–296 (YSGGRSSSSNSYS) the composition is skewed to low complexity. Residues 297–316 (RSDRYGEEGCYEEYRGRSPD) are compositionally biased toward basic and acidic residues. The segment covering 318–334 (HSGGRNSSSNSYGQSHH) has biased composition (low complexity). The segment covering 335–371 (YGGEGRYEEYRGRYEEYRGRSHEARSGGRSTDAHSGG) has biased composition (basic and acidic residues). A compositionally biased stretch (low complexity) spans 454–471 (THSGGRSSSSNSYGQSHR). The span at 472–488 (YGGEGHYEYRGRSHDAH) shows a compositional bias: basic and acidic residues. 3 stretches are compositionally biased toward polar residues: residues 564-574 (DANSGGRSPNA), 644-664 (NSGGCSPNAYSGGHDSSSQSH), and 752-774 (DANSGGRSPNAYSGGRDSSSNSY). Residues 785-798 (HYEEYRGRSHDTHS) show a composition bias toward basic and acidic residues. Over residues 818–828 (GRNSFSNSYGQ) the composition is skewed to polar residues. 3 stretches are compositionally biased toward basic and acidic residues: residues 831–842 (HYGRGGRYEEYQ), 920–948 (SGDHDRSSNSYGRSDRYSRGRDRVGRPDR), and 981–992 (GRFERGEGQSRY).

The protein is RNA-binding motif protein, X-linked-like-3 (RBMXL3) of Pan troglodytes (Chimpanzee).